The following is a 1054-amino-acid chain: Acid trehalase (1054 aa).

The first 21 residues, 1–21, serve as a signal peptide directing secretion; it reads MRFKSVFTLLPLLAQLPSGGA. 5 N-linked (GlcNAc...) asparagine glycosylation sites follow: asparagine 47, asparagine 135, asparagine 176, asparagine 283, and asparagine 307. 448–449 contributes to the substrate binding site; it reads WD. Asparagine 493, asparagine 513, asparagine 570, and asparagine 578 each carry an N-linked (GlcNAc...) asparagine glycan. Glutamate 584 functions as the Proton donor in the catalytic mechanism. 2 N-linked (GlcNAc...) asparagine glycosylation sites follow: asparagine 618 and asparagine 644. 650–651 contributes to the substrate binding site; it reads KQ. Asparagine 665, asparagine 734, asparagine 803, asparagine 826, asparagine 838, asparagine 903, asparagine 937, asparagine 966, and asparagine 992 each carry an N-linked (GlcNAc...) asparagine glycan.

This sequence belongs to the glycosyl hydrolase 65 family.

The catalysed reaction is alpha,alpha-trehalose + H2O = alpha-D-glucose + beta-D-glucose. This is Acid trehalase (treA) from Emericella nidulans (strain FGSC A4 / ATCC 38163 / CBS 112.46 / NRRL 194 / M139) (Aspergillus nidulans).